A 577-amino-acid chain; its full sequence is Acyl-coenzyme A synthetase ACSM1, mitochondrial (577 aa).

The N-terminal 31 residues, 1 to 31 (MQWLMRFRTLWGIHKSFHNIHPAPSQLRCRS), are a transit peptide targeting the mitochondrion. K85 bears the N6-succinyllysine mark. N6-acetyllysine; alternate is present on K146. An N6-succinyllysine; alternate modification is found at K146. K183 carries the post-translational modification N6-succinyllysine. K204 bears the N6-acetyllysine; alternate mark. K204 bears the N6-succinyllysine; alternate mark. K214 bears the N6-acetyllysine mark. ATP is bound at residue 226–234 (TSGTTGFPK). At K237 the chain carries N6-succinyllysine. K356 and K391 each carry N6-acetyllysine; alternate. Residues K356 and K391 each carry the N6-succinyllysine; alternate modification. Residues D452 and R467 each contribute to the ATP site. K531 carries the N6-acetyllysine modification. The residue at position 538 (K538) is an N6-acetyllysine; alternate. K538 carries the post-translational modification N6-succinyllysine; alternate. An N6-acetyllysine modification is found at K549. K563 is a binding site for ATP.

The protein belongs to the ATP-dependent AMP-binding enzyme family. As to quaternary structure, monomer. Mg(2+) serves as cofactor. Requires Mn(2+) as cofactor.

The protein resides in the mitochondrion matrix. It localises to the mitochondrion. It catalyses the reaction a medium-chain fatty acid + ATP + CoA = a medium-chain fatty acyl-CoA + AMP + diphosphate. The catalysed reaction is benzoate + ATP + CoA = benzoyl-CoA + AMP + diphosphate. It carries out the reaction (R)-lipoate + GTP + H(+) = (R)-lipoyl-GMP + diphosphate. The enzyme catalyses octanoate + ATP + CoA = octanoyl-CoA + AMP + diphosphate. It catalyses the reaction decanoate + ATP + CoA = decanoyl-CoA + AMP + diphosphate. The catalysed reaction is dodecanoate + ATP + CoA = dodecanoyl-CoA + AMP + diphosphate. It carries out the reaction tetradecanoate + ATP + CoA = tetradecanoyl-CoA + AMP + diphosphate. The enzyme catalyses hexanoate + ATP + CoA = hexanoyl-CoA + AMP + diphosphate. It catalyses the reaction butanoate + ATP + CoA = butanoyl-CoA + AMP + diphosphate. The catalysed reaction is hexadecanoate + ATP + CoA = hexadecanoyl-CoA + AMP + diphosphate. Its activity is regulated as follows. Activated by monovalent cations, such as potassium, rubidium or ammonium. Its function is as follows. Catalyzes the activation of fatty acids by CoA to produce an acyl-CoA, the first step in fatty acid metabolism. Capable of activating medium-chain fatty acids (e.g. butyric (C4) to decanoic (C10) acids), and certain carboxylate-containing xenobiotics, e.g. benzoate. Also catalyzes the activation of lipoate to lipoyl-nucleoside monophosphate. Activates lipoate with GTP at a 1000-fold higher rate than with ATP and activates both (R)- and (S)-lipoate to the respective lipoyl-GMP, with a preference for (R)-lipoate. This Homo sapiens (Human) protein is Acyl-coenzyme A synthetase ACSM1, mitochondrial (ACSM1).